The following is a 1370-amino-acid chain: DNA-directed RNA polymerase subunit beta (1370 aa).

Belongs to the RNA polymerase beta chain family. The RNAP catalytic core consists of 2 alpha, 1 beta, 1 beta' and 1 omega subunit. When a sigma factor is associated with the core the holoenzyme is formed, which can initiate transcription.

The catalysed reaction is RNA(n) + a ribonucleoside 5'-triphosphate = RNA(n+1) + diphosphate. Its function is as follows. DNA-dependent RNA polymerase catalyzes the transcription of DNA into RNA using the four ribonucleoside triphosphates as substrates. In Delftia acidovorans (strain DSM 14801 / SPH-1), this protein is DNA-directed RNA polymerase subunit beta.